A 490-amino-acid polypeptide reads, in one-letter code: ATP synthase subunit beta, chloroplastic (490 aa).

ATP is bound at residue glycine 170–threonine 177.

The protein belongs to the ATPase alpha/beta chains family. As to quaternary structure, F-type ATPases have 2 components, CF(1) - the catalytic core - and CF(0) - the membrane proton channel. CF(1) has five subunits: alpha(3), beta(3), gamma(1), delta(1), epsilon(1). CF(0) has four main subunits: a(1), b(1), b'(1) and c(9-12).

It is found in the plastid. It localises to the chloroplast thylakoid membrane. It catalyses the reaction ATP + H2O + 4 H(+)(in) = ADP + phosphate + 5 H(+)(out). Functionally, produces ATP from ADP in the presence of a proton gradient across the membrane. The catalytic sites are hosted primarily by the beta subunits. In Ipomoea obscura (Obscure morning glory), this protein is ATP synthase subunit beta, chloroplastic.